The chain runs to 117 residues: Large ribosomal subunit protein bL20c (117 aa).

The protein belongs to the bacterial ribosomal protein bL20 family.

Its subcellular location is the plastid. The protein localises to the chloroplast. Binds directly to 23S ribosomal RNA and is necessary for the in vitro assembly process of the 50S ribosomal subunit. It is not involved in the protein synthesizing functions of that subunit. The sequence is that of Large ribosomal subunit protein bL20c from Populus alba (White poplar).